A 734-amino-acid chain; its full sequence is Ribosomal RNA large subunit methyltransferase K/L (734 aa).

The region spanning H49–L167 is the THUMP domain.

This sequence belongs to the methyltransferase superfamily. RlmKL family.

The protein resides in the cytoplasm. The catalysed reaction is guanosine(2445) in 23S rRNA + S-adenosyl-L-methionine = N(2)-methylguanosine(2445) in 23S rRNA + S-adenosyl-L-homocysteine + H(+). The enzyme catalyses guanosine(2069) in 23S rRNA + S-adenosyl-L-methionine = N(2)-methylguanosine(2069) in 23S rRNA + S-adenosyl-L-homocysteine + H(+). Its function is as follows. Specifically methylates the guanine in position 2445 (m2G2445) and the guanine in position 2069 (m7G2069) of 23S rRNA. This is Ribosomal RNA large subunit methyltransferase K/L from Acinetobacter baumannii (strain AYE).